Consider the following 740-residue polypeptide: Inhibitor of nuclear factor kappa-B kinase subunit alpha (740 aa).

The Protein kinase domain occupies 15–302 (WEMRERLGTG…LTLKQPRCFV (288 aa)). Residues 21–29 (LGTGGFGNV) and Lys-44 contribute to the ATP site. Position 23 is a phosphothreonine; by PKB/AKT1 (Thr-23). The Proton acceptor role is filled by Asp-144. At Ser-176 the chain carries Phosphoserine; by MAP3K14. Position 180 is a phosphoserine (Ser-180). The tract at residues 455-476 (LLRYNTNLTKMKNTLISASQQL) is leucine-zipper. An NEMO-binding region spans residues 733–738 (LDWSWL).

The protein belongs to the protein kinase superfamily. Ser/Thr protein kinase family. I-kappa-B kinase subfamily. In terms of assembly, component of the I-kappa-B-kinase (IKK) core complex consisting of CHUK, IKBKB and IKBKG; probably four alpha/CHUK-beta/IKBKB dimers are associated with four gamma/IKBKG subunits. The IKK core complex seems to associate with regulatory or adapter proteins to form a IKK-signalosome holo-complex. The IKK complex associates with TERF2IP/RAP1, leading to promote IKK-mediated phosphorylation of RELA/p65. Part of a complex composed of NCOA2, NCOA3, CHUK/IKKA, IKBKB, IKBKG and CREBBP. Part of a 70-90 kDa complex at least consisting of CHUK/IKKA, IKBKB, NFKBIA, RELA, ELP1 and MAP3K14. Directly interacts with TRPC4AP. May interact with TRAF2. Interacts with NALP2. May interact with MAVS/IPS1. Interacts with ARRB1 and ARRB2. Interacts with NLRC5; prevents CHUK phosphorylation and kinase activity. Interacts with PIAS1; this interaction induces PIAS1 phosphorylation. Interacts with ZNF268 isoform 2; the interaction is further increased in a TNF-alpha-dependent manner. Interacts with IFIT5; the interaction synergizes the recruitment of IKK to MAP3K7 and enhances IKK phosphorylation. Interacts with LRRC14. Directly interacts with DDX3X after the physiological activation of the TLR7 and TLR8 pathways; this interaction enhances CHUK autophosphorylation. Ubiquitinated by TRIM56 via 'Lys-63'-linked ubiquitination, promoting activation of CHUK/IKKA. Post-translationally, phosphorylated by MAP3K14/NIK, AKT and to a lesser extent by MEKK1, and dephosphorylated by PP2A. Autophosphorylated.

The protein resides in the cytoplasm. It is found in the nucleus. The catalysed reaction is L-seryl-[I-kappa-B protein] + ATP = O-phospho-L-seryl-[I-kappa-B protein] + ADP + H(+). Activated when phosphorylated and inactivated when dephosphorylated. In terms of biological role, serine kinase that plays an essential role in the NF-kappa-B signaling pathway which is activated by multiple stimuli such as inflammatory cytokines, bacterial or viral products, DNA damages or other cellular stresses. Acts as a part of the canonical IKK complex in the conventional pathway of NF-kappa-B activation and phosphorylates inhibitors of NF-kappa-B on serine residues. These modifications allow polyubiquitination of the inhibitors and subsequent degradation by the proteasome. In turn, free NF-kappa-B is translocated into the nucleus and activates the transcription of hundreds of genes involved in immune response, growth control, or protection against apoptosis. Negatively regulates the pathway by phosphorylating the scaffold protein TAXBP1 and thus promoting the assembly of the A20/TNFAIP3 ubiquitin-editing complex (composed of A20/TNFAIP3, TAX1BP1, and the E3 ligases ITCH and RNF11). Therefore, CHUK plays a key role in the negative feedback of NF-kappa-B canonical signaling to limit inflammatory gene activation. As part of the non-canonical pathway of NF-kappa-B activation, the MAP3K14-activated CHUK/IKKA homodimer phosphorylates NFKB2/p100 associated with RelB, inducing its proteolytic processing to NFKB2/p52 and the formation of NF-kappa-B RelB-p52 complexes. In turn, these complexes regulate genes encoding molecules involved in B-cell survival and lymphoid organogenesis. Also participates in the negative feedback of the non-canonical NF-kappa-B signaling pathway by phosphorylating and destabilizing MAP3K14/NIK. Within the nucleus, phosphorylates CREBBP and consequently increases both its transcriptional and histone acetyltransferase activities. Modulates chromatin accessibility at NF-kappa-B-responsive promoters by phosphorylating histones H3 at 'Ser-10' that are subsequently acetylated at 'Lys-14' by CREBBP. Additionally, phosphorylates the CREBBP-interacting protein NCOA3. Also phosphorylates FOXO3 and may regulate this pro-apoptotic transcription factor. Interacts with SASH1. Phosphorylates RIPK1 at 'Ser-25' which represses its kinase activity and consequently prevents TNF-mediated RIPK1-dependent cell death. Phosphorylates AMBRA1 following mitophagy induction, promoting AMBRA1 interaction with ATG8 family proteins and its mitophagic activity. In Bos taurus (Bovine), this protein is Inhibitor of nuclear factor kappa-B kinase subunit alpha (CHUK).